Consider the following 119-residue polypeptide: MGKASHSSTAQDAVALFDSLRSAYSATPTTLKIIDLYIGFAVSTALIQVVYMAIVGSFPFNSFLSGVLSCIGTAVLAVCLRIQVNKENKEFKDLAPERAFADFVLCNLVLHMVIMNFLG.

At 1 to 35 the chain is on the cytoplasmic side; it reads MGKASHSSTAQDAVALFDSLRSAYSATPTTLKIID. The chain crosses the membrane as a helical span at residues 36-56; sequence LYIGFAVSTALIQVVYMAIVG. Residues 57 to 59 are Lumenal-facing; it reads SFP. A helical membrane pass occupies residues 60 to 80; the sequence is FNSFLSGVLSCIGTAVLAVCL. At 81–98 the chain is on the cytoplasmic side; it reads RIQVNKENKEFKDLAPER. Residues 99–119 traverse the membrane as a helical segment; it reads AFADFVLCNLVLHMVIMNFLG.

Belongs to the DAD/OST2 family. As to quaternary structure, component of the oligosaccharyltransferase (OST) complex.

It localises to the endoplasmic reticulum membrane. It functions in the pathway protein modification; protein glycosylation. Functionally, subunit of the oligosaccharyl transferase (OST) complex that catalyzes the initial transfer of a defined glycan (Glc(3)Man(9)GlcNAc(2) in eukaryotes) from the lipid carrier dolichol-pyrophosphate to an asparagine residue within an Asn-X-Ser/Thr consensus motif in nascent polypeptide chains, the first step in protein N-glycosylation. N-glycosylation occurs cotranslationally and the complex associates with the Sec61 complex at the channel-forming translocon complex that mediates protein translocation across the endoplasmic reticulum (ER). All subunits are required for a maximal enzyme activity. This Malus domestica (Apple) protein is Dolichyl-diphosphooligosaccharide--protein glycosyltransferase subunit DAD1 (DAD1).